The primary structure comprises 226 residues: Xanthocillin biosynthesis cluster protein F (226 aa).

It functions in the pathway secondary metabolite biosynthesis. Its function is as follows. Part of the gene cluster that mediates the biosynthesis of the isocyanide xanthocillin and its derivatives. The first step of the pathway consists in the conversion of tyrosine into a vinyl-isonitrile intermediate by the isocyanide synthase xanB. Subsequent oxidative dimerization of this intermediate to form xanthocillin may involve the cytochrome P450 monooxygenase xanG, whose expression is coregulated with that of XanB. Xanthocillin can be further modified by the isonitrile hydratase-like protein xanA which introduces N-formyl groups and the methyltransferase xanE which introduces methyl groups, leading to the production of several derivatives including fumiformamide. Finally, fumiformamide can be subject to both oxidative and reductive cyclization to yield melanocins E and F, respectively. The chain is Xanthocillin biosynthesis cluster protein F from Aspergillus fumigatus (strain ATCC MYA-4609 / CBS 101355 / FGSC A1100 / Af293) (Neosartorya fumigata).